Here is a 214-residue protein sequence, read N- to C-terminus: Probable transaldolase (214 aa).

K83 serves as the catalytic Schiff-base intermediate with substrate.

The protein belongs to the transaldolase family. Type 3B subfamily.

Its subcellular location is the cytoplasm. It catalyses the reaction D-sedoheptulose 7-phosphate + D-glyceraldehyde 3-phosphate = D-erythrose 4-phosphate + beta-D-fructose 6-phosphate. Its pathway is carbohydrate degradation; pentose phosphate pathway; D-glyceraldehyde 3-phosphate and beta-D-fructose 6-phosphate from D-ribose 5-phosphate and D-xylulose 5-phosphate (non-oxidative stage): step 2/3. Its function is as follows. Transaldolase is important for the balance of metabolites in the pentose-phosphate pathway. In Streptococcus equi subsp. zooepidemicus (strain H70), this protein is Probable transaldolase.